Consider the following 208-residue polypeptide: N-(5'-phosphoribosyl)anthranilate isomerase (208 aa).

The protein belongs to the TrpF family.

It carries out the reaction N-(5-phospho-beta-D-ribosyl)anthranilate = 1-(2-carboxyphenylamino)-1-deoxy-D-ribulose 5-phosphate. Its pathway is amino-acid biosynthesis; L-tryptophan biosynthesis; L-tryptophan from chorismate: step 3/5. The sequence is that of N-(5'-phosphoribosyl)anthranilate isomerase from Neisseria gonorrhoeae (strain ATCC 700825 / FA 1090).